The sequence spans 234 residues: 7-carboxy-7-deazaguanine synthase (234 aa).

The segment at 1-28 (MPLNCDTKTAGEISSSIPSGSGSHQPAA) is disordered. Residues 13–23 (ISSSIPSGSGS) are compositionally biased toward low complexity. Residues 42-44 (LQG) and arginine 57 each bind substrate. Residues 48 to 234 (TSGYPTIFIR…LQLHKFIGLP (187 aa)) enclose the Radical SAM core domain. Residues cysteine 61, cysteine 65, and cysteine 68 each contribute to the [4Fe-4S] cluster site. Threonine 70 is a Mg(2+) binding site. Threonine 100 contributes to the substrate binding site. Glycine 102 is a binding site for S-adenosyl-L-methionine. Residue proline 234 participates in substrate binding.

Belongs to the radical SAM superfamily. 7-carboxy-7-deazaguanine synthase family. Homodimer. Requires [4Fe-4S] cluster as cofactor. S-adenosyl-L-methionine is required as a cofactor. It depends on Mg(2+) as a cofactor.

The enzyme catalyses 6-carboxy-5,6,7,8-tetrahydropterin + H(+) = 7-carboxy-7-deazaguanine + NH4(+). The protein operates within purine metabolism; 7-cyano-7-deazaguanine biosynthesis. In terms of biological role, catalyzes the complex heterocyclic radical-mediated conversion of 6-carboxy-5,6,7,8-tetrahydropterin (CPH4) to 7-carboxy-7-deazaguanine (CDG), a step common to the biosynthetic pathways of all 7-deazapurine-containing compounds. This chain is 7-carboxy-7-deazaguanine synthase, found in Methanospirillum hungatei JF-1 (strain ATCC 27890 / DSM 864 / NBRC 100397 / JF-1).